Reading from the N-terminus, the 175-residue chain is ATP synthase subunit b, chloroplastic (175 aa).

A helical transmembrane segment spans residues Val-22–Gly-42.

This sequence belongs to the ATPase B chain family. In terms of assembly, F-type ATPases have 2 components, F(1) - the catalytic core - and F(0) - the membrane proton channel. F(1) has five subunits: alpha(3), beta(3), gamma(1), delta(1), epsilon(1). F(0) has four main subunits: a(1), b(1), b'(1) and c(10-14). The alpha and beta chains form an alternating ring which encloses part of the gamma chain. F(1) is attached to F(0) by a central stalk formed by the gamma and epsilon chains, while a peripheral stalk is formed by the delta, b and b' chains.

The protein localises to the plastid. The protein resides in the chloroplast thylakoid membrane. Functionally, f(1)F(0) ATP synthase produces ATP from ADP in the presence of a proton or sodium gradient. F-type ATPases consist of two structural domains, F(1) containing the extramembraneous catalytic core and F(0) containing the membrane proton channel, linked together by a central stalk and a peripheral stalk. During catalysis, ATP synthesis in the catalytic domain of F(1) is coupled via a rotary mechanism of the central stalk subunits to proton translocation. In terms of biological role, component of the F(0) channel, it forms part of the peripheral stalk, linking F(1) to F(0). The chain is ATP synthase subunit b, chloroplastic from Chlamydomonas reinhardtii (Chlamydomonas smithii).